Reading from the N-terminus, the 381-residue chain is Protein COS6 (381 aa).

The Cytoplasmic portion of the chain corresponds to 1–42 (MKENELKNEKSVDVLSVKQLESQKTVLPQDLFRSSFTWFCYE). The chain crosses the membrane as a helical span at residues 43–63 (IYKSLVFRIWMLLWLPLSVWW). At 64 to 69 (KLSNNW) the chain is on the extracellular side. Residues 70-90 (IYPLMVSLLVLFWGPVFVLVI) form a helical membrane-spanning segment. The Cytoplasmic portion of the chain corresponds to 91 to 381 (FRLSRKRSLS…QLSCSEESLA (291 aa)).

This sequence belongs to the DUP/COS family.

Its subcellular location is the membrane. The polypeptide is Protein COS6 (COS6) (Saccharomyces cerevisiae (strain ATCC 204508 / S288c) (Baker's yeast)).